The following is a 434-amino-acid chain: Attachment protein G3P (434 aa).

The first 19 residues, 1-19 (MKRKIIAISLFLYIPLSNA), serve as a signal peptide directing secretion. The N1 stretch occupies residues 19 to 88 (ADNWESITKS…LTFSGIWPDS (70 aa)). Cys63 and Cys98 form a disulfide bridge. The interval 89 to 107 (QFRLVTGDTCVYNGSPSEK) is G1 (Gly-rich linker). A disordered region spans residues 118–137 (EGDMQRSVPDEEPSEQTPEE). A compositionally biased stretch (acidic residues) spans 127–137 (DEEPSEQTPEE). The tract at residues 132–200 (EQTPEEICEA…PTGYVPESGE (69 aa)) is N2. 2 disulfides stabilise this stretch: Cys139/Cys167 and Cys177/Cys184. 2 disordered regions span residues 191-260 (PTGY…TGKS) and 272-311 (DASP…SVSD). A compositionally biased stretch (low complexity) spans 193-206 (GYVPESGESSSSPV). Residues 211 to 257 (TGGTGEGGSDTGGDTGGGDTGGGSTGGDTGGSTGGGSTGGGSTGGST) show a composition bias toward gly residues. The interval 252–434 (STGGSTGKSL…ATSLLRKGEQ (183 aa)) is CT. Over residues 293–302 (DNQKKADEQS) the composition is skewed to basic and acidic residues. A helical membrane pass occupies residues 408 to 429 (VLSWVMYCLTFWYVFQSATSLL).

Belongs to the inovirus G3P protein family. As to quaternary structure, interacts with G6P; this interaction is required for proper integration of G3P and G6P into the virion. Interacts with G8P. Interacts with the tip of the host pilus. Interacts (via N-terminus) with host TolA.

Its subcellular location is the virion. The protein resides in the host membrane. In terms of biological role, plays essential roles both in the penetration of the viral genome into the bacterial host via pilus retraction and in the extrusion process. During the initial step of infection, G3P mediates adsorption of the phage to its primary receptor, the tip of host I-pilus. Attachment of the phage causes pilus retraction bringing the viral particle into close proximity of the host cell inner membrane. Subsequent interaction with the host entry receptor tolA induces penetration of the viral DNA into the host cytoplasm. In the extrusion process, G3P mediates the release of the membrane-anchored virion from the cell via its C-terminal domain. The protein is Attachment protein G3P (III) of Escherichia coli (Bacteriophage I2-2).